The primary structure comprises 155 residues: MSRRGTAEEKTAKSDPIYRNRLVNMLVNRILKHGKKSLAYQIIYRAVKKIQQKTETNPLSVLRQAIRGVTPDIAVKARRVGGSTHQVPIEIGSTQGKALAIRWLLGASRKRPGRNMALKLSSELVDAAKGSGDAIRKKEETHRMAEANRAFAHFR.

The protein belongs to the universal ribosomal protein uS7 family. As to quaternary structure, part of the 30S ribosomal subunit.

It is found in the plastid. The protein resides in the chloroplast. Its function is as follows. One of the primary rRNA binding proteins, it binds directly to 16S rRNA where it nucleates assembly of the head domain of the 30S subunit. The polypeptide is Small ribosomal subunit protein uS7c (rps7) (Saruma henryi (Upright wild ginger)).